The sequence spans 303 residues: Putative band 7 family protein R614 (303 aa).

This sequence belongs to the band 7/mec-2 family.

This chain is Putative band 7 family protein R614, found in Acanthamoeba polyphaga (Amoeba).